Here is a 294-residue protein sequence, read N- to C-terminus: DNA adenine methyltransferase YhdJ (294 aa).

A disordered region spans residues 275–294 (TGNLSKRSRLSEVDPDLITK). The segment covering 283 to 294 (RLSEVDPDLITK) has biased composition (basic and acidic residues).

Belongs to the N(4)/N(6)-methyltransferase family.

The enzyme catalyses a 2'-deoxyadenosine in DNA + S-adenosyl-L-methionine = an N(6)-methyl-2'-deoxyadenosine in DNA + S-adenosyl-L-homocysteine + H(+). Its function is as follows. A beta subtype methylase, recognizes the double-stranded sequence 5'-ATGCAT-3' and methylates A-5. This chain is DNA adenine methyltransferase YhdJ (yhdJ), found in Escherichia coli (strain K12).